Consider the following 345-residue polypeptide: Calcium uniporter regulatory subunit MCUb, mitochondrial (345 aa).

A mitochondrion-targeting transit peptide spans 1–44 (MPGALSGRRMLPSGLCLGRWQLLRTIRARGRGDPRELPSTPQVL). Positions 188-221 (EIQKRRERHLMAKIDHLQEQLRPLEQVKAAIEAR) form a coiled coil. 2 helical membrane-spanning segments follow: residues 229–249 (LLWA…WLTW) and 259–279 (PVTF…FIIT). Residues 306–334 (FDVEQYNKLKEDLAEATESLESVRRSLRL) are a coiled coil.

The protein belongs to the MCU (TC 1.A.77) family. In terms of assembly, homooligomer. Associates with the uniplex complex, composed of MCU, MICU1, MICU2 and EMRE/SMDT1, inhibiting its activity. As to expression, detected in lung, brain and heart, and at lower levels in white fat, skeletal muscle and spleen. Detected at very low levels in kidney and liver. Highly expressed in macrophages during the progression of skeletal muscle regeneration.

The protein resides in the mitochondrion inner membrane. Negative regulator of the mitochondrial calcium uniporter (MCU), a channel that mediates calcium uptake into the mitochondrial matrix. MCUB is required to limit mitochondrial calcium overload during stress. Acts as a dominant-negative regulator that displaces MCU from the functional uniplex complex and thereby decreases the association of calcium sensors MICU1 and MICU2, preventing channel gating. Mitochondrial calcium homeostasis plays key roles in mitochondrial metabolism. Acts as an important regulator of mitochondrial metabolism in response to stress in muscle cells: induced in response to fasting, leading to restrict mitochondrial calcium uptake, resulting in reprogramming of mitochondria toward fatty acid oxidation preference. Acts as a regulator of macrophage polarization during skeletal muscle regeneration: inhibition of mitochondrial calcium uptake drives differentiation of macrophages with anti-inflammatory profile, promoting the differentiation and fusion of satellite cells. This is Calcium uniporter regulatory subunit MCUb, mitochondrial from Mus musculus (Mouse).